Reading from the N-terminus, the 172-residue chain is Adenine phosphoribosyltransferase (172 aa).

This sequence belongs to the purine/pyrimidine phosphoribosyltransferase family. In terms of assembly, homodimer.

Its subcellular location is the cytoplasm. It catalyses the reaction AMP + diphosphate = 5-phospho-alpha-D-ribose 1-diphosphate + adenine. Its pathway is purine metabolism; AMP biosynthesis via salvage pathway; AMP from adenine: step 1/1. In terms of biological role, catalyzes a salvage reaction resulting in the formation of AMP, that is energically less costly than de novo synthesis. The chain is Adenine phosphoribosyltransferase from Prochlorococcus marinus (strain MIT 9215).